The following is a 378-amino-acid chain: MAQCNLFYQYPITPILEGHVRNILICTEKDVEKLQSQSSLRLREKIDQGHRDKLLRMRLKTELDALQKKMQKDSDVLNSHLKAIEDALLFTNDGEVNVETKADAQLIPKSPEKLEKFNQVAITPLDPFIRFTDDFRGEMINTFFNNAQMWNFTFGSWFYKLKRVFYNEPGLRRALKLTNVDSLTISKELLAVTVNALEQATVYPIFGSEMSDLEAALCILAAFYSTYENSQIDERTTLVDVITLLPVIFRLLGSEITALKNVSPSGTYFGFNDPSCMKFFVPMRKGKHYAENTFGNHVLIKMLLGRGVMQKIPGEKISQNFDVEARLHGAIKNDVLVYWTYQLMRPKLGNNVPIFIHDQHYLRSGLVAIESLFLLWRI.

This sequence belongs to the herpesviridae UL25 family. Heterodimerizes with packaging protein U64. Interacts with major capsid protein U57 and triplex capsid protein U29, essentially at the pentamer vertices. May interact with large tegument protein U31.

Its subcellular location is the virion. It is found in the host nucleus. In terms of biological role, plays a role at the late stage in the encapsidation of viral DNA, assuring correct genome cleavage and presumably stabilizing capsids that contain full-lengtht viral genomes. Located on the external vertices of the T=16 icosahedric capsid, may bind together the tegument and the capsid through interaction with large tegument protein U31. The sequence is that of Virion-packaging protein UL25 homolog (U50) from Human herpesvirus 6A (strain GS) (HHV-6 variant A).